We begin with the raw amino-acid sequence, 339 residues long: Uridylate kinase PUMPKIN, chloroplastic (339 aa).

A chloroplast-targeting transit peptide spans Met1–Ser53. Low complexity predominate over residues Leu52–Ser79. A disordered region spans residues Leu52 to Thr89. An ATP-binding site is contributed by Lys102 to Gly105. An involved in allosteric activation by GTP region spans residues Gly110 to Asn115. UMP is bound at residue Gly144. Residues Gly145 and Arg149 each coordinate ATP. UMP is bound at residue Asp165. ATP-binding positions include Gln180–Glu184 and Pro189–Arg191. Residue Thr226–Thr233 participates in UMP binding. Residues Thr253, Phe259, and Asp262 each contribute to the ATP site.

The protein belongs to the UMP kinase family. In terms of assembly, homomultimer. Homohexamer. Forms RNA-containing megadalton-sized complexes. As to expression, expressed exclusively in leaves, but not in roots.

It localises to the plastid. The protein localises to the chloroplast stroma. It carries out the reaction UMP + ATP = UDP + ADP. The protein operates within pyrimidine metabolism; CTP biosynthesis via de novo pathway; UDP from UMP (UMPK route): step 1/1. Functionally, catalyzes the reversible phosphorylation of UMP to UDP. Required for specific post-transcriptional processes of many plastid transcripts (e.g. PSI (PsaA, PsaF), PSII (D1, CP43, CP47), Cytochrome b(6)f (Cytb(6)), ATP synthase (AtpC), LHCs (LHCa3, LHCb2), and NDH (NdhH)), thus being essential for retaining photosynthetic activity in chloroplasts. Associates with group II introns of the plastid transcripts trnG-UCC, trnV-UAC, petB, petD and ndhA to stabilize corresponding precursor RNAs. In Arabidopsis thaliana (Mouse-ear cress), this protein is Uridylate kinase PUMPKIN, chloroplastic.